We begin with the raw amino-acid sequence, 837 residues long: Tuftelin-interacting protein 11 (837 aa).

Basic and acidic residues-rich tracts occupy residues 1–13 (MSLS…GEGR) and 53–64 (VWAERDSDDERP). Disordered stretches follow at residues 1–21 (MSLS…DDER), 53–72 (VWAE…KRAR), and 85–133 (LKKG…KGFA). The tract at residues 1–50 (MSLSHLYRDGEGRIDDDDDERENFEITDWDLQNEFNPNRQRHWQTKEEAT) is required for interaction with DHX15. Phosphoserine occurs at positions 2, 59, and 98. Over residues 91-102 (EEAELEDSDDEE) the composition is skewed to acidic residues. The segment covering 103–116 (KPVKQDDFPKDFGP) has biased composition (basic and acidic residues). Serine 144 is subject to Phosphoserine. Positions 149–195 (TKGIGQKLLQKMGYVPGRGLGKNAQGIINPIEAKQRKGKGAVGAYGS) constitute a G-patch domain. The interval 179–236 (IEAKQRKGKGAVGAYGSERTTQSMQDFPVVDSEEEAEEEFQKELSQWRKDPSGSKKKP) is disordered. Serine 210 is subject to Phosphoserine. The span at 217 to 231 (EFQKELSQWRKDPSG) shows a compositional bias: basic and acidic residues. The Nuclear localization signal signature appears at 700-705 (VKDKFN). The segment at 710 to 734 (IMNRAVSSNVGAYMQPGARENIAYL) is required for nuclear speckle localization.

It belongs to the TFP11/STIP family. As to quaternary structure, identified in the spliceosome C complex. Found in the Intron Large (IL) complex, a post-mRNA release spliceosomal complex containing the excised intron, U2, U5 and U6 snRNPs, and splicing factors. Interacts with TUFT1. Interacts with DHX15; indicative for a recruitment of DHX15 to the IL complex. Interacts with GCFC2.

It is found in the cytoplasm. Its subcellular location is the nucleus. Involved in pre-mRNA splicing, specifically in spliceosome disassembly during late-stage splicing events. Intron turnover seems to proceed through reactions in two lariat-intron associated complexes termed Intron Large (IL) and Intron Small (IS). In cooperation with DHX15 seems to mediate the transition of the U2, U5 and U6 snRNP-containing IL complex to the snRNP-free IS complex leading to efficient debranching and turnover of excised introns. May play a role in the differentiation of ameloblasts and odontoblasts or in the forming of the enamel extracellular matrix. The chain is Tuftelin-interacting protein 11 (TFIP11) from Pongo abelii (Sumatran orangutan).